The primary structure comprises 858 residues: Translation initiation factor IF-2 (858 aa).

The disordered stretch occupies residues 59–147 (KEHAEKRRER…GKKLEGQERK (89 aa)). Positions 361–530 (PRPPVVVVMG…LLVADLLELK (170 aa)) constitute a tr-type G domain. Positions 370–377 (GHVDHGKT) are G1. A GTP-binding site is contributed by 370-377 (GHVDHGKT). The tract at residues 395 to 399 (GITQH) is G2. Positions 416-419 (DTPG) are G3. Residues 416–420 (DTPGH) and 470–473 (NKID) each bind GTP. Residues 470 to 473 (NKID) form a G4 region. Residues 506–508 (SAK) are G5.

Belongs to the TRAFAC class translation factor GTPase superfamily. Classic translation factor GTPase family. IF-2 subfamily.

The protein localises to the cytoplasm. One of the essential components for the initiation of protein synthesis. Protects formylmethionyl-tRNA from spontaneous hydrolysis and promotes its binding to the 30S ribosomal subunits. Also involved in the hydrolysis of GTP during the formation of the 70S ribosomal complex. In Caldicellulosiruptor saccharolyticus (strain ATCC 43494 / DSM 8903 / Tp8T 6331), this protein is Translation initiation factor IF-2.